A 400-amino-acid polypeptide reads, in one-letter code: Sphingosine 1-phosphate receptor 5 (400 aa).

The Extracellular portion of the chain corresponds to 1-41 (MEPGLLRPAPVSEVIVLHYNYTGKLRGARYQPGAGLRADAA). A glycan (N-linked (GlcNAc...) asparagine) is linked at asparagine 20. A helical transmembrane segment spans residues 42–62 (VCLAVCAFIVLENLAVLLVLV). Residues 63-68 (RHPRFH) are Cytoplasmic-facing. A helical transmembrane segment spans residues 69-89 (APMFLLLGSLTLSDLLAGAAY). The Extracellular segment spans residues 90–111 (ATNILLSGPLTLRLSPALWFAR). A helical transmembrane segment spans residues 112–132 (EGGVFVALAASVLSLLAIALE). Residues 133-151 (RHLTMARRGPAPAASRART) lie on the Cytoplasmic side of the membrane. A helical transmembrane segment spans residues 152–172 (LAMAVAAWGASLLLGLLPALG). Residues 173-192 (WNCLGRLETCSTVLPLYAKA) lie on the Extracellular side of the membrane. The helical transmembrane segment at 193-213 (YVLFCVLAFLGILAAICALYA) threads the bilayer. Over 214-253 (RIYCQVRANARRLRAGPGSRRATSSSRSRHTPRSLALLRT) the chain is Cytoplasmic. A helical transmembrane segment spans residues 254-274 (LSVVLLAFVACWGPLFLLLLL). Residues 275-288 (DVACPARACPVLLQ) lie on the Extracellular side of the membrane. Residues 289-309 (ADPFLGLAMANSLLNPIIYTF) traverse the membrane as a helical segment. Residues 310-400 (TNRDLRHALL…NRSLVPTATD (91 aa)) lie on the Cytoplasmic side of the membrane. The S-palmitoyl cysteine moiety is linked to residue cysteine 324. Positions 331 to 400 (QDSSNSLQRS…NRSLVPTATD (70 aa)) are disordered. 3 positions are modified to phosphoserine: serine 340, serine 342, and serine 384. Over residues 360–400 (DRSSSPSEHLSPQQDGVDTSCSTGSPGVATANRSLVPTATD) the composition is skewed to polar residues.

It belongs to the G-protein coupled receptor 1 family. In terms of tissue distribution, expressed in spleen and brain. In the CNS expression is restricted to oligodendrocytes.

It localises to the cell membrane. Its function is as follows. Receptor for the lysosphingolipid sphingosine 1-phosphate (S1P). S1P is a bioactive lysophospholipid that elicits diverse physiological effect on most types of cells and tissues. Is coupled to both the G(i/0)alpha and G(12) subclass of heteromeric G-proteins. S1P activation on oligodendroglial cells modulates two distinct functional pathways mediating either process retraction or cell survival. S1P activation on O4-positive pre-oligodendrocytes induces process retraction via a Rho kinase/collapsin response-mediated protein signaling pathway. The S1P-induced survival of mature oligodendrocytes is mediated through a pertussis toxin-sensitive, Akt-dependent pathway. S1P activation on oligodendroglial cells modulates two distinct functional pathways mediating either process retraction or cell survival. These effects depend on the developmental stage of the cell. This is Sphingosine 1-phosphate receptor 5 (S1pr5) from Mus musculus (Mouse).